The chain runs to 914 residues: Isoleucine--tRNA ligase (914 aa).

The short motif at 64–74 (PYANGNFHLGH) is the 'HIGH' region element. L-isoleucyl-5'-AMP is bound at residue Glu-557. The 'KMSKS' region signature appears at 598-602 (PMSKS). Lys-601 is an ATP binding site. Zn(2+)-binding residues include Cys-889, Cys-892, Cys-906, and Cys-909.

Belongs to the class-I aminoacyl-tRNA synthetase family. IleS type 1 subfamily. Monomer. Requires Zn(2+) as cofactor.

It is found in the cytoplasm. The catalysed reaction is tRNA(Ile) + L-isoleucine + ATP = L-isoleucyl-tRNA(Ile) + AMP + diphosphate. In terms of biological role, catalyzes the attachment of isoleucine to tRNA(Ile). As IleRS can inadvertently accommodate and process structurally similar amino acids such as valine, to avoid such errors it has two additional distinct tRNA(Ile)-dependent editing activities. One activity is designated as 'pretransfer' editing and involves the hydrolysis of activated Val-AMP. The other activity is designated 'posttransfer' editing and involves deacylation of mischarged Val-tRNA(Ile). In Leptospira interrogans serogroup Icterohaemorrhagiae serovar Lai (strain 56601), this protein is Isoleucine--tRNA ligase.